The following is a 116-amino-acid chain: Large ribosomal subunit protein uL18 (116 aa).

Belongs to the universal ribosomal protein uL18 family. In terms of assembly, part of the 50S ribosomal subunit; part of the 5S rRNA/L5/L18/L25 subcomplex. Contacts the 5S and 23S rRNAs.

In terms of biological role, this is one of the proteins that bind and probably mediate the attachment of the 5S RNA into the large ribosomal subunit, where it forms part of the central protuberance. This chain is Large ribosomal subunit protein uL18, found in Caulobacter vibrioides (strain ATCC 19089 / CIP 103742 / CB 15) (Caulobacter crescentus).